The following is a 91-amino-acid chain: RING finger protein Z (91 aa).

A lipid anchor (N-myristoyl glycine; by host) is attached at glycine 2. The segment at 35–71 adopts an RING-type; atypical zinc-finger fold; sequence CKCCWFQDKNLVECSDHYLCLKCISSMLKRGKNCEIC. Positions 85–88 match the PTAP/PSAP motif motif; that stretch reads PTAP.

The protein belongs to the arenaviridae Z protein family. In terms of assembly, interacts with protein NP; this interaction probably directs the encapsidated genome to budding sites. Interacts (via RING domain) with polymerase L; this interaction inhibits viral transcription and replication, Z partially blocks the product exit tunnel for the releasing nascent RNA product. Interacts with the glycoprotein complex; this interaction plays a role in virion budding. Interacts with host eIF4E; this interaction results in eIF4E reduced affinity for its substrate, the 5'-m7 G cap structure. Interacts (via late-budding domain) with host TSG101; this interaction is essential for budding and release of viral particles. Interacts with host RPLP0; this interaction may serve to load ribosome-like particles inside the virion. Interacts with host PML; this interaction induces PML bodies redistribution in the cytoplasm upon viral infection. Post-translationally, myristoylation is required for the role of RING finger protein Z in assembly and budding.

The protein resides in the virion. Its subcellular location is the host cytoplasm. It is found in the host perinuclear region. It localises to the host cell membrane. Its function is as follows. Plays a crucial role in virion assembly and budding. Expressed late in the virus life cycle, it acts as an inhibitor of viral transcription and RNA synthesis by interacting with the viral polymerase L. Presumably recruits the NP encapsidated genome to cellular membranes at budding sites via direct interaction with NP. Plays critical roles in the final steps of viral release by interacting with host TSG101, a member of the vacuolar protein-sorting pathway and using other cellular host proteins involved in vesicle formation pathway. The budding of the virus progeny occurs after association of protein Z with the viral glycoprotein complex SSP-GP1-GP2 at the cell periphery, step that requires myristoylation of protein Z. Also selectively represses protein production by associating with host eIF4E. In cell-based minigenome assay, has an inhibitory effect on the ribonucleoprotein machinery (vRNP), which is responsible for the replication and transcription of the viral genome. The protein is RING finger protein Z of Latino mammarenavirus (isolate Rat/Bolivia/MARU 1924/1965) (LATV).